Here is a 627-residue protein sequence, read N- to C-terminus: Chaperone protein DnaK (627 aa).

A Phosphothreonine; by autocatalysis modification is found at threonine 197. Residues 602–611 (ENQHSEANTV) show a composition bias toward polar residues. The interval 602 to 627 (ENQHSEANTVNDEKVVDADFQDVDKK) is disordered. The span at 612–627 (NDEKVVDADFQDVDKK) shows a compositional bias: basic and acidic residues.

This sequence belongs to the heat shock protein 70 family.

Acts as a chaperone. The protein is Chaperone protein DnaK of Rickettsia felis (strain ATCC VR-1525 / URRWXCal2) (Rickettsia azadi).